A 326-amino-acid chain; its full sequence is Tetraacyldisaccharide 4'-kinase (326 aa).

53 to 60 serves as a coordination point for ATP; it reads SVGGNGKT.

The protein belongs to the LpxK family.

It carries out the reaction a lipid A disaccharide + ATP = a lipid IVA + ADP + H(+). It participates in glycolipid biosynthesis; lipid IV(A) biosynthesis; lipid IV(A) from (3R)-3-hydroxytetradecanoyl-[acyl-carrier-protein] and UDP-N-acetyl-alpha-D-glucosamine: step 6/6. Functionally, transfers the gamma-phosphate of ATP to the 4'-position of a tetraacyldisaccharide 1-phosphate intermediate (termed DS-1-P) to form tetraacyldisaccharide 1,4'-bis-phosphate (lipid IVA). This Actinobacillus pleuropneumoniae serotype 5b (strain L20) protein is Tetraacyldisaccharide 4'-kinase.